The primary structure comprises 574 residues: Cell division cycle 7-related protein kinase (574 aa).

S27 is modified (phosphoserine). Residues 58 to 574 (FKIEDKIGEG…LHPFFKDMSL (517 aa)) form the Protein kinase domain. ATP-binding positions include 64–72 (IGEGTFSSV) and K90. Catalysis depends on D177, which acts as the Proton acceptor. Residue K268 forms a Glycyl lysine isopeptide (Lys-Gly) (interchain with G-Cter in SUMO2) linkage. T503 carries the phosphothreonine modification.

Belongs to the protein kinase superfamily. Ser/Thr protein kinase family. CDC7 subfamily. As to quaternary structure, forms a complex with either DBF4/DBF4A or DBF4B, leading to the activation of the kinase activity. Interacts with CLASPIN (via the acidic patch); the interaction is required for phosphorylation of MCM proteins and CLASPIN. The cofactor is Mg(2+).

The protein localises to the nucleus. It catalyses the reaction L-seryl-[protein] + ATP = O-phospho-L-seryl-[protein] + ADP + H(+). The enzyme catalyses L-threonyl-[protein] + ATP = O-phospho-L-threonyl-[protein] + ADP + H(+). Its function is as follows. Kinase involved in initiation of DNA replication. Phosphorylates critical substrates that regulate the G1/S phase transition and initiation of DNA replication, such as MCM proteins and CLASPIN. The sequence is that of Cell division cycle 7-related protein kinase from Homo sapiens (Human).